Here is a 465-residue protein sequence, read N- to C-terminus: Phenylalanine--tRNA ligase alpha subunit (465 aa).

Positions 311 and 389 each coordinate L-phenylalanine. E391 provides a ligand contact to Mg(2+).

This sequence belongs to the class-II aminoacyl-tRNA synthetase family. Phe-tRNA synthetase alpha subunit type 2 subfamily. Tetramer of two alpha and two beta subunits. The cofactor is Mg(2+).

Its subcellular location is the cytoplasm. It catalyses the reaction tRNA(Phe) + L-phenylalanine + ATP = L-phenylalanyl-tRNA(Phe) + AMP + diphosphate + H(+). The sequence is that of Phenylalanine--tRNA ligase alpha subunit from Metallosphaera sedula (strain ATCC 51363 / DSM 5348 / JCM 9185 / NBRC 15509 / TH2).